We begin with the raw amino-acid sequence, 232 residues long: Fibrillarin-like rRNA/tRNA 2'-O-methyltransferase (232 aa).

S-adenosyl-L-methionine-binding positions include 89-90 (TT), 108-109 (EF), 133-134 (DA), and 153-156 (DIAQ).

The protein belongs to the methyltransferase superfamily. Fibrillarin family. As to quaternary structure, interacts with nop5. Component of box C/D small ribonucleoprotein (sRNP) particles that contain rpl7ae, FlpA and nop5, plus a guide RNA.

Functionally, involved in pre-rRNA and tRNA processing. Utilizes the methyl donor S-adenosyl-L-methionine to catalyze the site-specific 2'-hydroxyl methylation of ribose moieties in rRNA and tRNA. Site specificity is provided by a guide RNA that base pairs with the substrate. Methylation occurs at a characteristic distance from the sequence involved in base pairing with the guide RNA. This Saccharolobus islandicus (strain M.16.27) (Sulfolobus islandicus) protein is Fibrillarin-like rRNA/tRNA 2'-O-methyltransferase.